We begin with the raw amino-acid sequence, 505 residues long: Aminoaldehyde dehydrogenase 1a (505 aa).

Position 101 (Asp101) interacts with Na(+). Residues 161–163 (TPW) and 187–190 (KPSE) each bind NAD(+). Leu191 is a Na(+) binding site. NAD(+) is bound by residues 241 to 244 (SFET) and Glu262. Glu262 (proton acceptor) is an active-site residue. Cys296 functions as the Nucleophile in the catalytic mechanism. 2 residues coordinate NAD(+): Glu395 and Trp461.

This sequence belongs to the aldehyde dehydrogenase family. As to quaternary structure, forms homodimers.

It catalyses the reaction 4-aminobutanal + NAD(+) + H2O = 4-aminobutanoate + NADH + 2 H(+). The catalysed reaction is 3-aminopropanal + NAD(+) + H2O = beta-alanine + NADH + 2 H(+). It carries out the reaction 4-(trimethylamino)butanal + NAD(+) + H2O = 4-(trimethylamino)butanoate + NADH + 2 H(+). The enzyme catalyses 4-guanidinobutanal + NAD(+) + H2O = 4-guanidinobutanoate + NADH + 2 H(+). It catalyses the reaction betaine aldehyde + NAD(+) + H2O = glycine betaine + NADH + 2 H(+). Its pathway is amine and polyamine biosynthesis; betaine biosynthesis via choline pathway; betaine from betaine aldehyde: step 1/1. Its function is as follows. Dehydrogenase that catalyzes the oxidation of several aminoaldehydes. Metabolizes and detoxifies aldehyde products of polyamine degradation to non-toxic amino acids. Catalyzes the oxidation of 4-aminobutanal and 3-aminopropanal to 4-aminobutanoate and beta-alanine, respectively. Catalyzes the oxidation of 4-(trimethylamino)butanal and 4-guanidinobutanal to 4-trimethylammoniobutanoate and 4-guanidinobutanoate, respectively. Catalyzes the oxidation of betaine aldehyde to glycine betaine. Functionally, dehydrogenase that catalyzes the oxidation of several aminoaldehydes. Catalyzes the oxidation of betaine aldehyde to glycine betaine. Catalyzes the oxidation of 4-(trimethylamino)butanal to 4-trimethylammoniobutanoate. This Zea mays (Maize) protein is Aminoaldehyde dehydrogenase 1a.